We begin with the raw amino-acid sequence, 221 residues long: Membrane-bound lytic murein transglycosylase E (221 aa).

Belongs to the transglycosylase Slt family.

It catalyses the reaction Exolytic cleavage of the (1-&gt;4)-beta-glycosidic linkage between N-acetylmuramic acid (MurNAc) and N-acetylglucosamine (GlcNAc) residues in peptidoglycan, from either the reducing or the non-reducing ends of the peptidoglycan chains, with concomitant formation of a 1,6-anhydrobond in the MurNAc residue.. Functionally, murein-degrading enzyme. May play a role in recycling of muropeptides during cell elongation and/or cell division. The protein is Membrane-bound lytic murein transglycosylase E (mltE) of Buchnera aphidicola subsp. Acyrthosiphon pisum (strain APS) (Acyrthosiphon pisum symbiotic bacterium).